A 99-amino-acid polypeptide reads, in one-letter code: Integration host factor subunit alpha (99 aa).

The interval 51–71 (NFDLRDKNQRPGRNPKTGEDI) is disordered.

The protein belongs to the bacterial histone-like protein family. Heterodimer of an alpha and a beta chain.

In terms of biological role, this protein is one of the two subunits of integration host factor, a specific DNA-binding protein that functions in genetic recombination as well as in transcriptional and translational control. The protein is Integration host factor subunit alpha (ihfA) of Dickeya dadantii (strain 3937) (Erwinia chrysanthemi (strain 3937)).